The following is a 279-amino-acid chain: Urease accessory protein UreD (279 aa).

The protein belongs to the UreD family. As to quaternary structure, ureD, UreF and UreG form a complex that acts as a GTP-hydrolysis-dependent molecular chaperone, activating the urease apoprotein by helping to assemble the nickel containing metallocenter of UreC. The UreE protein probably delivers the nickel.

It is found in the cytoplasm. Required for maturation of urease via the functional incorporation of the urease nickel metallocenter. The protein is Urease accessory protein UreD of Trichormus variabilis (strain ATCC 29413 / PCC 7937) (Anabaena variabilis).